The chain runs to 404 residues: MKLPIYLDYSATTPVDPRVAQKMSECLLVDGNFGNPASRSHVFGWKAEESVENARRQVADLVNADPREIVWTSGATESDNLAIKGVAHFYHTKGKHLITSKIEHKAVLDTMRQLEREGFEVTYIEPGEDGLITPAMVEAALRDDTILVSIMHVNNEIGTINDIAAIGELTRSKGVLFHVDGAQSTGKVDIDLQALKVDLMSFSAHKTYGPKGIGALYVSRKPRVRLEATMHGGGHERGMRSGTLATHQIVGMGEAFHVAKEDMAAENLRIKALSDRFYKQVEHLEELYINGSMTARVPHNLNLSFNYVEGESLIMALKDLAVSSGSACTSASLEPSYVLRALGRNDELAHSSIRFTFGRFTTEEEIDYAAQKVCEAVTKLRALSPLWDMYKDGVDISKIEWAAH.

Pyridoxal 5'-phosphate is bound by residues 75 to 76, Asn155, Gln183, and 203 to 205; these read AT and SAH. The residue at position 206 (Lys206) is an N6-(pyridoxal phosphate)lysine. Thr243 provides a ligand contact to pyridoxal 5'-phosphate. Cys328 (cysteine persulfide intermediate) is an active-site residue. Cys328 serves as a coordination point for [2Fe-2S] cluster.

This sequence belongs to the class-V pyridoxal-phosphate-dependent aminotransferase family. NifS/IscS subfamily. In terms of assembly, homodimer. Forms a heterotetramer with IscU, interacts with other sulfur acceptors. It depends on pyridoxal 5'-phosphate as a cofactor.

It is found in the cytoplasm. It carries out the reaction (sulfur carrier)-H + L-cysteine = (sulfur carrier)-SH + L-alanine. Its pathway is cofactor biosynthesis; iron-sulfur cluster biosynthesis. Master enzyme that delivers sulfur to a number of partners involved in Fe-S cluster assembly, tRNA modification or cofactor biosynthesis. Catalyzes the removal of elemental sulfur atoms from cysteine to produce alanine. Functions as a sulfur delivery protein for Fe-S cluster synthesis onto IscU, an Fe-S scaffold assembly protein, as well as other S acceptor proteins. This Pseudomonas fluorescens (strain ATCC BAA-477 / NRRL B-23932 / Pf-5) protein is Cysteine desulfurase IscS.